We begin with the raw amino-acid sequence, 128 residues long: uncharacterized protein (128 aa).

A VOC domain is found at 5–128; sequence SIHHIAIICS…DQLPLELYEQ (124 aa). Residues His8, Glu56, His77, and Glu124 each contribute to the a divalent metal cation site.

This is an uncharacterized protein from Bacillus subtilis (strain 168).